An 83-amino-acid polypeptide reads, in one-letter code: MRFHTLLFLSFLLLVSCALICTAQHPGLEKSGMFHENVGKGQHIEEKRSCIERMQTCGVEAGLPCCSGAPCICPYIGDCICIQ.

Residues 1–23 form the signal peptide; that stretch reads MRFHTLLFLSFLLLVSCALICTA. The propeptide occupies 24-48; sequence QHPGLEKSGMFHENVGKGQHIEEKR. 3 cysteine pairs are disulfide-bonded: C50–C66, C57–C71, and C65–C79.

This sequence belongs to the neurotoxin 07 (Beta/delta-agtx) family. 03 (aga-4) subfamily. JZTX sub-subfamily. In terms of tissue distribution, expressed by the venom gland.

The protein resides in the secreted. Its function is as follows. Probable ion channel inhibitor. The chain is U25-theraphotoxin-Cg1b from Chilobrachys guangxiensis (Chinese earth tiger tarantula).